The chain runs to 189 residues: Molybdopterin synthase catalytic subunit (189 aa).

Residues M1 to E30 show a composition bias toward polar residues. The segment at M1–E41 is disordered. Position 20 is a phosphoserine (S20). Over residues S32–E41 the composition is skewed to basic and acidic residues. Substrate is bound by residues H143–R144, K159, and K166–E168.

This sequence belongs to the MoaE family. MOCS2B subfamily. As to quaternary structure, heterotetramer; composed of 2 small (MOCS2A) and 2 large (MOCS2B) subunits.

It localises to the cytoplasm. The protein localises to the cytosol. It carries out the reaction 2 [molybdopterin-synthase sulfur-carrier protein]-C-terminal-Gly-aminoethanethioate + cyclic pyranopterin phosphate + H2O = molybdopterin + 2 [molybdopterin-synthase sulfur-carrier protein]-C-terminal Gly-Gly + 2 H(+). It participates in cofactor biosynthesis; molybdopterin biosynthesis. Functionally, catalytic subunit of the molybdopterin synthase complex, a complex that catalyzes the conversion of precursor Z into molybdopterin. Acts by mediating the incorporation of 2 sulfur atoms from thiocarboxylated MOCS2A into precursor Z to generate a dithiolene group. The polypeptide is Molybdopterin synthase catalytic subunit (Mus musculus (Mouse)).